We begin with the raw amino-acid sequence, 301 residues long: MKYTIISGPTAVGKTDLIIEISTKIGAQIISLDSRQIYKLMDIGTAKPTKEEQQKVKHHLIDHIYPDEYYNAFYFRQDALKLRKQLTKKGIIPLFVGGTGLYIDALVKGFFEGAPKDENIRKHLNKLEKKEPGTLRTMLQKYDPEYALKIHPSDMKRTIRALEVFFKTGKKISELQSQTKISNKYKIIVLTRNRQELYERINTRVEKMIKAGLIDEVEKLLELYPKDINAFQTIGYKELIHYFENKYDLKTAIHLIKRNTRHFARRQLIWLRRYKNAIWINLSEISRRETIEKIEKIINEV.

8 to 15 lines the ATP pocket; it reads GPTAVGKT. Residue 10-15 coordinates substrate; that stretch reads TAVGKT. Residues 33-36 are interaction with substrate tRNA; that stretch reads DSRQ.

Belongs to the IPP transferase family. Monomer. It depends on Mg(2+) as a cofactor.

The catalysed reaction is adenosine(37) in tRNA + dimethylallyl diphosphate = N(6)-dimethylallyladenosine(37) in tRNA + diphosphate. Its function is as follows. Catalyzes the transfer of a dimethylallyl group onto the adenine at position 37 in tRNAs that read codons beginning with uridine, leading to the formation of N6-(dimethylallyl)adenosine (i(6)A). The polypeptide is tRNA dimethylallyltransferase (Thermosipho melanesiensis (strain DSM 12029 / CIP 104789 / BI429)).